The primary structure comprises 76 residues: uncharacterized protein (76 aa).

This is an uncharacterized protein from Magallana gigas (Pacific oyster).